A 405-amino-acid chain; its full sequence is Acetate kinase (405 aa).

Mg(2+) is bound at residue Asn10. Lys17 serves as a coordination point for ATP. Arg93 contacts substrate. Asp150 serves as the catalytic Proton donor/acceptor. Residues 210 to 214 (HLGNG), 284 to 286 (DMR), and 332 to 336 (GVGEN) each bind ATP. Glu386 is a Mg(2+) binding site.

It belongs to the acetokinase family. As to quaternary structure, homodimer. Mg(2+) is required as a cofactor. Requires Mn(2+) as cofactor.

The protein localises to the cytoplasm. It catalyses the reaction acetate + ATP = acetyl phosphate + ADP. It participates in metabolic intermediate biosynthesis; acetyl-CoA biosynthesis; acetyl-CoA from acetate: step 1/2. In terms of biological role, catalyzes the formation of acetyl phosphate from acetate and ATP. Can also catalyze the reverse reaction. The sequence is that of Acetate kinase from Streptomyces avermitilis (strain ATCC 31267 / DSM 46492 / JCM 5070 / NBRC 14893 / NCIMB 12804 / NRRL 8165 / MA-4680).